The sequence spans 33 residues: uncharacterized protein (33 aa).

The helical transmembrane segment at 11 to 31 threads the bilayer; sequence LALVIYMSVVLLLMVGVPLLF.

Its subcellular location is the membrane. This is an uncharacterized protein from Saccharomyces cerevisiae (strain ATCC 204508 / S288c) (Baker's yeast).